Reading from the N-terminus, the 251-residue chain is UstYa family oxidase phomYb (251 aa).

Residues 1–47 are disordered; the sequence is MDGYSSKKPRSASPSRSSLTEVEEEERDTLLKTVSLEEEDKSGENGP. The chain crosses the membrane as a helical span at residues 58–78; it reads AIGILMLSNIAFIAAFLTVFV. An N-linked (GlcNAc...) asparagine glycan is attached at asparagine 135. 2 consecutive short sequence motifs (HXXHC) follow at residues 160–164 and 187–191; these read HQLHC and HVSHC.

This sequence belongs to the ustYa family.

The protein localises to the membrane. It participates in mycotoxin biosynthesis. UstYa family oxidase; part of the gene cluster that mediates the biosynthesis of the phomopsins, a group of hexapeptide mycotoxins which infects lupins and causes lupinosis disease in livestock. Within the pathway, phomYb is probably involved in the construction of the macrocyclic structure of the phomopsins. The pathway starts with the processing of the precursor phomA by several endopeptidases including kexin proteases as well as the cluster-specific S41 family peptidase phomP1 and the oligopeptidase phomG to produce 10 identical copies of the hexapeptide Tyr-Val-Ile-Pro-Ile-Asp. After being excised from the precursor peptide, the core peptides are cyclized and modified post-translationally by enzymes encoded within the gene cluster. The timing and order of proteolysis of the phomA precursor and PTMs are still unknown. Two tyrosinase-like enzymes, phomQ1 and phomQ2, catalyze the chlorination and hydroxylation of Tyr, respectively. PhomYb, is proposed to be involved in the construction of the macrocyclic structure. The other 4 ustYa family proteins may be involved in PTMs that generate the unique structure of phomopsin A. PhomYa is required for the hydroxylation of C-beta of Tyr. PhomYc, phomYd, and phomYe are responsible for the biosynthesis of 2,3-dehydroisoleucine (dIle), 2,3-dehydroaspartic acid (dAsp), and 3,4-dehydroproline (dPro), respectively. While dIle formation by phomYc is indispensable for the installation of dAsp by phomYd, the order of the other PTMs have not been elucidated yet. Most of the biosynthetic enzymes likely have broad substrate specificity, and thus, there might be a metabolic grid from a precursor to phomopsin A. The enzyme(s) responsible for the biosynthesis of 3,4-dehydrovaline (dVal) have also not been identified yet. Finally, phomM acts as an S-adenosylmethionine-dependent alpha-N-methyltransferase that catalyzes two successive N-methylation reactions, converting N-desmethyl-phomopsin A to phomopsin A and phomopsin A further to an N,N-dimethylated congener called phomopsin E. The sequence is that of UstYa family oxidase phomYb from Diaporthe leptostromiformis (Lupinosis disease fungus).